The sequence spans 213 residues: Large ribosomal subunit protein uL3 (213 aa).

It belongs to the universal ribosomal protein uL3 family. As to quaternary structure, part of the 50S ribosomal subunit. Forms a cluster with proteins L14 and L19.

In terms of biological role, one of the primary rRNA binding proteins, it binds directly near the 3'-end of the 23S rRNA, where it nucleates assembly of the 50S subunit. In Bifidobacterium adolescentis (strain ATCC 15703 / DSM 20083 / NCTC 11814 / E194a), this protein is Large ribosomal subunit protein uL3.